The chain runs to 414 residues: Gamma-glutamyl phosphate reductase (414 aa).

This sequence belongs to the gamma-glutamyl phosphate reductase family.

The protein resides in the cytoplasm. It carries out the reaction L-glutamate 5-semialdehyde + phosphate + NADP(+) = L-glutamyl 5-phosphate + NADPH + H(+). The protein operates within amino-acid biosynthesis; L-proline biosynthesis; L-glutamate 5-semialdehyde from L-glutamate: step 2/2. Its function is as follows. Catalyzes the NADPH-dependent reduction of L-glutamate 5-phosphate into L-glutamate 5-semialdehyde and phosphate. The product spontaneously undergoes cyclization to form 1-pyrroline-5-carboxylate. The chain is Gamma-glutamyl phosphate reductase from Clostridium botulinum (strain Eklund 17B / Type B).